Consider the following 101-residue polypeptide: MSDNSEVQGIHPVELSVYSLVSSDLDNLYQAINELRESQALLILKLRTVRDSLRLENELLFDSNEYKAQFKEVNNLQKRLQKITLRLKDLERRSSQLTTSS.

Residues 62–100 (DSNEYKAQFKEVNNLQKRLQKITLRLKDLERRSSQLTTS) are a coiled coil.

Belongs to the SNAPIN family. Component of the biogenesis of lysosome-related organelles complex-1 (BLOC-1).

It localises to the endosome. Component of the biogenesis of lysosome-related organelles complex-1 (BLOC-1), a complex involved in endosomal cargo sorting. The chain is Biogenesis of lysosome-related organelles complex 1 subunit SNN1 (SNN1) from Candida glabrata (strain ATCC 2001 / BCRC 20586 / JCM 3761 / NBRC 0622 / NRRL Y-65 / CBS 138) (Yeast).